Consider the following 58-residue polypeptide: Large ribosomal subunit protein uL30 (58 aa).

It belongs to the universal ribosomal protein uL30 family. In terms of assembly, part of the 50S ribosomal subunit.

This chain is Large ribosomal subunit protein uL30, found in Trichlorobacter lovleyi (strain ATCC BAA-1151 / DSM 17278 / SZ) (Geobacter lovleyi).